Reading from the N-terminus, the 705-residue chain is tRNA 5-methylaminomethyl-2-thiouridine biosynthesis bifunctional protein MnmC (705 aa).

The tract at residues 1–241 (MTIKTADIQF…KREMLAGIIA (241 aa)) is tRNA (mnm(5)s(2)U34)-methyltransferase. Residues 289–705 (IGAGIAGASM…LIRQLIRREV (417 aa)) form an FAD-dependent cmnm(5)s(2)U34 oxidoreductase region.

It in the N-terminal section; belongs to the methyltransferase superfamily. tRNA (mnm(5)s(2)U34)-methyltransferase family. This sequence in the C-terminal section; belongs to the DAO family. FAD is required as a cofactor.

Its subcellular location is the cytoplasm. It catalyses the reaction 5-aminomethyl-2-thiouridine(34) in tRNA + S-adenosyl-L-methionine = 5-methylaminomethyl-2-thiouridine(34) in tRNA + S-adenosyl-L-homocysteine + H(+). Catalyzes the last two steps in the biosynthesis of 5-methylaminomethyl-2-thiouridine (mnm(5)s(2)U) at the wobble position (U34) in tRNA. Catalyzes the FAD-dependent demodification of cmnm(5)s(2)U34 to nm(5)s(2)U34, followed by the transfer of a methyl group from S-adenosyl-L-methionine to nm(5)s(2)U34, to form mnm(5)s(2)U34. In Pseudoalteromonas atlantica (strain T6c / ATCC BAA-1087), this protein is tRNA 5-methylaminomethyl-2-thiouridine biosynthesis bifunctional protein MnmC.